The primary structure comprises 301 residues: UDP-3-O-acyl-N-acetylglucosamine deacetylase (301 aa).

Residues His-81, His-237, and Asp-241 each coordinate Zn(2+). His-264 functions as the Proton donor in the catalytic mechanism.

This sequence belongs to the LpxC family. Zn(2+) is required as a cofactor.

The enzyme catalyses a UDP-3-O-[(3R)-3-hydroxyacyl]-N-acetyl-alpha-D-glucosamine + H2O = a UDP-3-O-[(3R)-3-hydroxyacyl]-alpha-D-glucosamine + acetate. It participates in glycolipid biosynthesis; lipid IV(A) biosynthesis; lipid IV(A) from (3R)-3-hydroxytetradecanoyl-[acyl-carrier-protein] and UDP-N-acetyl-alpha-D-glucosamine: step 2/6. Its function is as follows. Catalyzes the hydrolysis of UDP-3-O-myristoyl-N-acetylglucosamine to form UDP-3-O-myristoylglucosamine and acetate, the committed step in lipid A biosynthesis. This chain is UDP-3-O-acyl-N-acetylglucosamine deacetylase, found in Leptospira borgpetersenii serovar Hardjo-bovis (strain JB197).